Consider the following 354-residue polypeptide: Annexin A13 (354 aa).

Annexin repeat units follow at residues 26-97 (NDPN…MLLT), 98-177 (DTDK…ALLQ), 203-275 (NLVE…LTLN), and 279-350 (NRPK…ALIG). Residues methionine 39, glycine 41, glycine 43, threonine 44, glutamate 46, glutamate 83, methionine 111, glycine 113, glycine 115, glutamate 118, aspartate 163, aspartate 265, methionine 292, glycine 294, leucine 295, glycine 296, and glutamate 336 each coordinate Ca(2+).

This sequence belongs to the annexin family. Homodimer.

It localises to the tegument. Its subcellular location is the secreted. It is found in the extracellular exosome. The protein localises to the host cell. Involved in reproduction of the worm. Involved in host-parasite interaction. Delivered into the host cell by means of parasite exosomes. Binds to acidic phospholipid membranes in a calcium-dependent manner in vitro. Causes aggregation of liposomes in the presence of calcium, but not in its absence. Likely to promote membrane fusion. May provide structural integrity within the tegument. This Schistosoma japonicum (Blood fluke) protein is Annexin A13.